The chain runs to 419 residues: Ribosome biogenesis protein WDR12 homolog (419 aa).

The tract at residues 10–91 (VQVHLKTKQE…EDAIEIEYVE (82 aa)) is ubiquitin-like (UBL) domain. WD repeat units follow at residues 103–141 (LHDDWVSAVKASGKWILTGCYDNTLNIWTNKGKHILTIP), 142–184 (GHTA…NTVE), 191–230 (GHERGVDSVSVSPDGQRFATGSWDTMLKVWSAELEDAGEG), 249–287 (GHRESISAVQWMDASTLLTGSWDHTLKVWDLSLEGIKAE), 289–328 (STNKSIFDASYSKLNHLILTASADKNLRLYDSRTNQGSVV), 334–374 (GHNA…APLY), and 378–416 (GHGEKVLDIDWSNPKYIVSGGSDNTVRVFKSRKALVENM).

The protein belongs to the WD repeat WDR12/YTM1 family.

The protein resides in the nucleus. The protein localises to the nucleolus. It localises to the nucleoplasm. Its function is as follows. Required for maturation of ribosomal RNAs and formation of the large ribosomal subunit. The sequence is that of Ribosome biogenesis protein WDR12 homolog from Drosophila pseudoobscura pseudoobscura (Fruit fly).